Here is a 309-residue protein sequence, read N- to C-terminus: Ribonuclease H2 subunit B (309 aa).

N-acetylalanine is present on Ala2. Residue Lys295 is modified to N6-acetyllysine. Ser296 bears the Phosphoserine mark.

The protein belongs to the RNase H2 subunit B family. The RNase H2 complex is a heterotrimer composed of the catalytic subunit RNASEH2A and the non-catalytic subunits RNASEH2B and RNASEH2C.

The protein localises to the nucleus. Functionally, non catalytic subunit of RNase H2, an endonuclease that specifically degrades the RNA of RNA:DNA hybrids. Participates in DNA replication, possibly by mediating the removal of lagging-strand Okazaki fragment RNA primers during DNA replication. Mediates the excision of single ribonucleotides from DNA:RNA duplexes. The chain is Ribonuclease H2 subunit B (RNASEH2B) from Bos taurus (Bovine).